A 448-amino-acid chain; its full sequence is Phosphoglucosamine mutase (448 aa).

S100 acts as the Phosphoserine intermediate in catalysis. Mg(2+) is bound by residues S100, D240, D242, and D244. S100 bears the Phosphoserine mark.

The protein belongs to the phosphohexose mutase family. Mg(2+) is required as a cofactor. In terms of processing, activated by phosphorylation.

It catalyses the reaction alpha-D-glucosamine 1-phosphate = D-glucosamine 6-phosphate. In terms of biological role, catalyzes the conversion of glucosamine-6-phosphate to glucosamine-1-phosphate. The protein is Phosphoglucosamine mutase of Bacillus cereus (strain ATCC 10987 / NRS 248).